Consider the following 155-residue polypeptide: Sperm microtubule associated protein 1 (155 aa).

The chain is Sperm microtubule associated protein 1 (Spmap1) from Mus musculus (Mouse).